A 53-amino-acid chain; its full sequence is Sec-independent protein translocase protein TatA (53 aa).

The chain crosses the membrane as a helical span at residues 1-21 (MGMSVSHLLIVLLIIFVLFGA).

The protein belongs to the TatA/E family. The Tat system comprises two distinct complexes: a TatABC complex, containing multiple copies of TatA, TatB and TatC subunits, and a separate TatA complex, containing only TatA subunits. Substrates initially bind to the TatABC complex, which probably triggers association of the separate TatA complex to form the active translocon.

It localises to the cell inner membrane. Part of the twin-arginine translocation (Tat) system that transports large folded proteins containing a characteristic twin-arginine motif in their signal peptide across membranes. TatA could form the protein-conducting channel of the Tat system. This is Sec-independent protein translocase protein TatA from Rickettsia massiliae (strain Mtu5).